Consider the following 262-residue polypeptide: Hydroxyethylthiazole kinase (262 aa).

Residue Met50 participates in substrate binding. 2 residues coordinate ATP: Arg125 and Thr171. Gly198 is a binding site for substrate.

Belongs to the Thz kinase family. It depends on Mg(2+) as a cofactor.

It catalyses the reaction 5-(2-hydroxyethyl)-4-methylthiazole + ATP = 4-methyl-5-(2-phosphooxyethyl)-thiazole + ADP + H(+). Its pathway is cofactor biosynthesis; thiamine diphosphate biosynthesis; 4-methyl-5-(2-phosphoethyl)-thiazole from 5-(2-hydroxyethyl)-4-methylthiazole: step 1/1. Functionally, catalyzes the phosphorylation of the hydroxyl group of 4-methyl-5-beta-hydroxyethylthiazole (THZ). The sequence is that of Hydroxyethylthiazole kinase from Escherichia coli (strain SMS-3-5 / SECEC).